We begin with the raw amino-acid sequence, 368 residues long: Protein-glutamate methylesterase/protein-glutamine glutaminase 2 (368 aa).

Positions 6 to 123 (KVLLVDDSAV…KEYLESAAGE (118 aa)) constitute a Response regulatory domain. A 4-aspartylphosphate modification is found at D57. A CheB-type methylesterase domain is found at 169 to 355 (IAGANKIAAL…SLERIPQCVL (187 aa)). Catalysis depends on residues S181, H207, and D303.

This sequence belongs to the CheB family. Post-translationally, phosphorylated by CheA. Phosphorylation of the N-terminal regulatory domain activates the methylesterase activity.

It is found in the cytoplasm. It carries out the reaction [protein]-L-glutamate 5-O-methyl ester + H2O = L-glutamyl-[protein] + methanol + H(+). The enzyme catalyses L-glutaminyl-[protein] + H2O = L-glutamyl-[protein] + NH4(+). Its function is as follows. Involved in chemotaxis. Part of a chemotaxis signal transduction system that modulates chemotaxis in response to various stimuli. Catalyzes the demethylation of specific methylglutamate residues introduced into the chemoreceptors (methyl-accepting chemotaxis proteins or MCP) by CheR. Also mediates the irreversible deamidation of specific glutamine residues to glutamic acid. The sequence is that of Protein-glutamate methylesterase/protein-glutamine glutaminase 2 from Hahella chejuensis (strain KCTC 2396).